The chain runs to 31 residues: Palustrin-2c (31 aa).

The cysteines at positions 23 and 29 are disulfide-linked.

In terms of tissue distribution, expressed by the skin glands.

Its subcellular location is the secreted. Its function is as follows. Antimicrobial activity against Gram-negative bacterium E.coli. This chain is Palustrin-2c, found in Lithobates palustris (Pickerel frog).